We begin with the raw amino-acid sequence, 438 residues long: MKANAERIEKNTVLLEIEVDAEQLSQAMERAYRKLVKSVSVPGFRRGKTPRPIFERYVGKSALYEEAMDYLVPVAYFKAVEDTGIEPIEKPKVEVVQVEEGKPVLFKATVQVKPEVKLGQYKELELTRPSTEVSGEDVEKELVRLQNRYAKLVTLEEGTVEKGDTAIIDFAGRIDGEPIKGGEGRDYSLEIGSGSFVQGFEEQLVGMAAGETREIDVTFPENYKAEELAGKEAKFTVTVKEIKRKEIAPLDDDFAKDVSEFDTLEELRNDLSNKLKQAAENRAEYQVKMDAVTKAVDNAEVEIPEVMITNQLADMIGTLASRLSSQGLSLEDYLKYTGSTLEDMRASMMPEAERNVKTALVLEAIARAEGIKASDEEVDEEIKKMAAHYQQDPEVVRKMLEKEGQLKFIAEGLVREKTVKFLVENARILEDTNGQANE.

The region spanning 163–248 is the PPIase FKBP-type domain; sequence GDTAIIDFAG…VKEIKRKEIA (86 aa).

The protein belongs to the FKBP-type PPIase family. Tig subfamily.

Its subcellular location is the cytoplasm. The catalysed reaction is [protein]-peptidylproline (omega=180) = [protein]-peptidylproline (omega=0). In terms of biological role, involved in protein export. Acts as a chaperone by maintaining the newly synthesized protein in an open conformation. Functions as a peptidyl-prolyl cis-trans isomerase. This chain is Trigger factor, found in Pelotomaculum thermopropionicum (strain DSM 13744 / JCM 10971 / SI).